The sequence spans 114 residues: Probable 4-amino-4-deoxy-L-arabinose-phosphoundecaprenol flippase subunit ArnE (114 aa).

Transmembrane regions (helical) follow at residues 38-58 (LTLR…LLWL), 64-84 (LPLS…TLAA), and 94-114 (LRHW…SWHL). The EamA domain occupies 43-112 (LAIAVVSLGL…IMFGILLMSW (70 aa)).

The protein belongs to the ArnE family. Heterodimer of ArnE and ArnF.

The protein resides in the cell inner membrane. Its pathway is bacterial outer membrane biogenesis; lipopolysaccharide biosynthesis. Its function is as follows. Translocates 4-amino-4-deoxy-L-arabinose-phosphoundecaprenol (alpha-L-Ara4N-phosphoundecaprenol) from the cytoplasmic to the periplasmic side of the inner membrane. In Yersinia pestis bv. Antiqua (strain Antiqua), this protein is Probable 4-amino-4-deoxy-L-arabinose-phosphoundecaprenol flippase subunit ArnE.